Reading from the N-terminus, the 264-residue chain is Cell division protein FtsQ (264 aa).

The tract at residues 1-24 is disordered; it reads MAGPTTAERGDRQQESSGPPPARW. Over 1–31 the chain is Cytoplasmic; sequence MAGPTTAERGDRQQESSGPPPARWSGTRRLR. A helical membrane pass occupies residues 32–52; the sequence is ALVVLAALLVLLAGGCAWLLY. Topologically, residues 53 to 264 are extracellular; sequence GSSWLRLERV…VPTAPASSGS (212 aa). The POTRA domain maps to 57-126; it reads LRLERVSVSG…HGIGLKVTER (70 aa).

This sequence belongs to the FtsQ/DivIB family. FtsQ subfamily.

Its subcellular location is the cell membrane. Essential cell division protein. The polypeptide is Cell division protein FtsQ (Streptomyces collinus).